Consider the following 291-residue polypeptide: tRNA U34 carboxymethyltransferase (291 aa).

Carboxy-S-adenosyl-L-methionine-binding positions include K61, W75, K80, G100, D122–S124, Y169, and R284.

This sequence belongs to the class I-like SAM-binding methyltransferase superfamily. CmoB family. As to quaternary structure, homotetramer.

The enzyme catalyses carboxy-S-adenosyl-L-methionine + 5-hydroxyuridine(34) in tRNA = 5-carboxymethoxyuridine(34) in tRNA + S-adenosyl-L-homocysteine + H(+). In terms of biological role, catalyzes carboxymethyl transfer from carboxy-S-adenosyl-L-methionine (Cx-SAM) to 5-hydroxyuridine (ho5U) to form 5-carboxymethoxyuridine (cmo5U) at position 34 in tRNAs. This is tRNA U34 carboxymethyltransferase from Campylobacter lari (strain RM2100 / D67 / ATCC BAA-1060).